A 248-amino-acid polypeptide reads, in one-letter code: Carboxy-S-adenosyl-L-methionine synthase (248 aa).

S-adenosyl-L-methionine is bound by residues Y40, 65 to 67 (GCS), 95 to 96 (DN), 123 to 124 (DI), N138, and R205.

This sequence belongs to the class I-like SAM-binding methyltransferase superfamily. Cx-SAM synthase family. As to quaternary structure, homodimer.

It catalyses the reaction prephenate + S-adenosyl-L-methionine = carboxy-S-adenosyl-L-methionine + 3-phenylpyruvate + H2O. Functionally, catalyzes the conversion of S-adenosyl-L-methionine (SAM) to carboxy-S-adenosyl-L-methionine (Cx-SAM). The polypeptide is Carboxy-S-adenosyl-L-methionine synthase (Hahella chejuensis (strain KCTC 2396)).